The chain runs to 234 residues: Opacity protein opA56 (234 aa).

Residue alanine 1 is a signal peptide.

The protein belongs to the opacity porin family.

It localises to the cell outer membrane. Implicated in a number of adherence functions. OPA proteins are implicated in pathogenesis and are subject to phase variation. In Neisseria gonorrhoeae, this protein is Opacity protein opA56 (opaF).